The sequence spans 329 residues: MTNIGVSIIGSGSAIPKTSLDNQQLSQIVETSDEWIISRTGINKRQLVDTTESLCSLATQASLAALNQANITPKDIDLIILATSTPDDLFGTACKIQWELGAQKAVAFDITVACSGFLFALVTGAQFIRNGVYQNVLLIGADILSRWVDWEDRRTCVLFGDGAGAVLLQASESDRLLGFELGSDGSQNSCLSLSYQPQEKRIIEGVTVSQGTYQPIAMNGKEVYRFVVQKVPEAIEKALLKANIDIDKLDWLLLHQANQRILDAVANRLNIPPEKVISNLRNYGNTSAASIPLALDEVVREGLVKSGDIIAASGFGAGLSWGAVIFQWN.

Catalysis depends on residues C114 and H255. An ACP-binding region spans residues 256-260; the sequence is QANQR. N285 is an active-site residue.

The protein belongs to the thiolase-like superfamily. FabH family. Homodimer.

It is found in the cytoplasm. It catalyses the reaction malonyl-[ACP] + acetyl-CoA + H(+) = 3-oxobutanoyl-[ACP] + CO2 + CoA. The protein operates within lipid metabolism; fatty acid biosynthesis. In terms of biological role, catalyzes the condensation reaction of fatty acid synthesis by the addition to an acyl acceptor of two carbons from malonyl-ACP. Catalyzes the first condensation reaction which initiates fatty acid synthesis and may therefore play a role in governing the total rate of fatty acid production. Possesses both acetoacetyl-ACP synthase and acetyl transacylase activities. Its substrate specificity determines the biosynthesis of branched-chain and/or straight-chain of fatty acids. The protein is Beta-ketoacyl-[acyl-carrier-protein] synthase III of Trichodesmium erythraeum (strain IMS101).